Here is a 179-residue protein sequence, read N- to C-terminus: Large ribosomal subunit protein uL5 (179 aa).

The protein belongs to the universal ribosomal protein uL5 family. Part of the 50S ribosomal subunit; part of the 5S rRNA/L5/L18/L25 subcomplex. Contacts the 5S rRNA and the P site tRNA. Forms a bridge to the 30S subunit in the 70S ribosome.

Functionally, this is one of the proteins that bind and probably mediate the attachment of the 5S RNA into the large ribosomal subunit, where it forms part of the central protuberance. In the 70S ribosome it contacts protein S13 of the 30S subunit (bridge B1b), connecting the 2 subunits; this bridge is implicated in subunit movement. Contacts the P site tRNA; the 5S rRNA and some of its associated proteins might help stabilize positioning of ribosome-bound tRNAs. This is Large ribosomal subunit protein uL5 from Pectobacterium carotovorum subsp. carotovorum (strain PC1).